A 151-amino-acid chain; its full sequence is uncharacterized protein (151 aa).

This is an uncharacterized protein from Bacillus subtilis (strain 168).